Consider the following 310-residue polypeptide: tRNA dimethylallyltransferase (310 aa).

An ATP-binding site is contributed by 14–21 (GPTASGKS). 16–21 (TASGKS) is a binding site for substrate. Interaction with substrate tRNA regions lie at residues 39-42 (DSMQ) and 163-167 (QRIVR).

Belongs to the IPP transferase family. As to quaternary structure, monomer. Mg(2+) serves as cofactor.

It carries out the reaction adenosine(37) in tRNA + dimethylallyl diphosphate = N(6)-dimethylallyladenosine(37) in tRNA + diphosphate. In terms of biological role, catalyzes the transfer of a dimethylallyl group onto the adenine at position 37 in tRNAs that read codons beginning with uridine, leading to the formation of N6-(dimethylallyl)adenosine (i(6)A). The chain is tRNA dimethylallyltransferase from Brucella melitensis biotype 2 (strain ATCC 23457).